A 798-amino-acid polypeptide reads, in one-letter code: Integrin beta-7 (798 aa).

A signal peptide spans 1-19 (MVALPMVLVLLLVLSRGES). The Extracellular segment spans residues 20 to 723 (ELDAKIPSTG…VRPQEKGADH (704 aa)). In terms of domain architecture, PSI spans 44–92 (SCQPAPSCQKCILSHPSCAWCKQLNFTASGEAEARRCARREELLARGCP). Disulfide bonds link Cys-51–Cys-476, Cys-54–Cys-80, Cys-64–Cys-91, Cys-216–Cys-223, Cys-271–Cys-311, Cys-412–Cys-428, and Cys-448–Cys-474. The N-linked (GlcNAc...) asparagine glycan is linked to Asn-68. The tract at residues 98–124 (EPRGQQEVLQDQPLSQGARGEGATQLA) is disordered. Residues 150–389 (YPVDLYYLMD…QLIMDAYNSL (240 aa)) form the VWFA domain. Residues Ser-161 and Ser-163 each contribute to the Mg(2+) site. Residues Ser-163, Asp-166, Asp-167, and Asp-198 each contribute to the Ca(2+) site. Residues Asn-254, Asp-256, Pro-258, and Glu-259 each coordinate Ca(2+). Glu-259 provides a ligand contact to Mg(2+). A glycan (N-linked (GlcNAc...) asparagine) is linked at Asn-279. Residues Asp-289 and Glu-373 each contribute to the Ca(2+) site. An N-linked (GlcNAc...) asparagine glycan is attached at Asn-434. N-linked (GlcNAc...) asparagine glycosylation is present at Asn-477. Disulfide bonds link Cys-478-Cys-497, Cys-488-Cys-500, Cys-502-Cys-511, Cys-513-Cys-545, Cys-527-Cys-543, Cys-537-Cys-548, Cys-550-Cys-559, Cys-561-Cys-582, Cys-566-Cys-580, Cys-574-Cys-585, Cys-587-Cys-596, Cys-598-Cys-621, Cys-605-Cys-619, Cys-613-Cys-624, Cys-626-Cys-635, Cys-638-Cys-641, Cys-645-Cys-688, Cys-651-Cys-670, and Cys-654-Cys-666. I-EGF domains follow at residues 478-512 (CSDT…RLCE), 513-560 (CSVA…HLCE), 561-597 (CDDA…RACE), and 598-636 (CSGD…ALCD). N-linked (GlcNAc...) asparagine glycosylation is present at Asn-531. N-linked (GlcNAc...) asparagine glycosylation is present at Asn-590. 2 N-linked (GlcNAc...) asparagine glycosylation sites follow: Asn-665 and Asn-674. A helical transmembrane segment spans residues 724–746 (TQAIVLGCVGGIVAVGLGLVLAY). The Cytoplasmic segment spans residues 747-798 (RLSVEIYDRREYSRFEKEQQQLNWKQDSNPLYKSAITTTINPRFQEADSPTL). A Phosphotyrosine; by Tyr-kinases modification is found at Tyr-778.

The protein belongs to the integrin beta chain family. Heterodimer of an alpha and a beta subunit. ITGB7/beta-7 associates with either ITGA4/alpha-4 or ITGAE/alpha-E. Integrin ITGA4/ITGB7 interacts with MADCAM1. Integrin ITGA4/ITGB7 interacts with VCAM1 and fibronectin. Interacts with FLNA (via filamin repeats 4, 9, 12, 17, 19, 21, and 23). As to quaternary structure, (Microbial infection) May interact with HIV-1 gp120. As to expression, expressed in a variety of leukocyte lines.

The protein resides in the cell membrane. Functionally, integrin ITGA4/ITGB7 (alpha-4/beta-7) (Peyer patches-specific homing receptor LPAM-1) is an adhesion molecule that mediates lymphocyte migration and homing to gut-associated lymphoid tissue (GALT). Integrin ITGA4/ITGB7 interacts with the cell surface adhesion molecules MADCAM1 which is normally expressed by the vascular endothelium of the gastrointestinal tract. Also interacts with VCAM1 and fibronectin, an extracellular matrix component. It recognizes one or more domains within the alternatively spliced CS-1 region of fibronectin. Interactions involve the tripeptide L-D-T in MADCAM1, and L-D-V in fibronectin. Integrin ITGAE/ITGB7 (alpha-E/beta-7, HML-1) is a receptor for E-cadherin. In terms of biological role, (Microbial infection) Binds to HIV-1 gp120, thereby allowing the virus to enter GALT, which is thought to be the major trigger of AIDS disease. Interaction would involve a tripeptide L-D-I in HIV-1 gp120. The polypeptide is Integrin beta-7 (ITGB7) (Homo sapiens (Human)).